A 230-amino-acid polypeptide reads, in one-letter code: Uracil-DNA glycosylase (230 aa).

D70 serves as the catalytic Proton acceptor.

The protein belongs to the uracil-DNA glycosylase (UDG) superfamily. UNG family.

Its subcellular location is the cytoplasm. It catalyses the reaction Hydrolyzes single-stranded DNA or mismatched double-stranded DNA and polynucleotides, releasing free uracil.. Its function is as follows. Excises uracil residues from the DNA which can arise as a result of misincorporation of dUMP residues by DNA polymerase or due to deamination of cytosine. This chain is Uracil-DNA glycosylase, found in Pseudomonas syringae pv. syringae (strain B728a).